The chain runs to 356 residues: Viral cathepsin (356 aa).

An N-terminal signal peptide occupies residues 1-40; it reads MYANALVCLNPSFIKLQFHIVCTMNIIGIVTLALCSAASA. The propeptide at 41–144 is activation peptide; the sequence is ADEGAAYNLQ…IILNQPPDKG (104 aa). Cystine bridges form between cysteine 165–cysteine 206, cysteine 199–cysteine 239, and cysteine 295–cysteine 343. Residue cysteine 168 is part of the active site. Catalysis depends on residues histidine 302 and asparagine 322.

It belongs to the peptidase C1 family. Synthesized as an inactive proenzyme and activated by proteolytic removal of the inhibitory propeptide.

It carries out the reaction Endopeptidase of broad specificity, hydrolyzing substrates of both cathepsin L and cathepsin B.. In terms of biological role, cysteine protease that plays an essential role in host liquefaction to facilitate horizontal transmission of the virus. May participate in the degradation of foreign protein expressed by the baculovirus system. The protein is Viral cathepsin (VCATH) of Lepidoptera (butterflies and moths).